A 235-amino-acid chain; its full sequence is Large ribosomal subunit protein uL1 (235 aa).

The protein belongs to the universal ribosomal protein uL1 family. Part of the 50S ribosomal subunit.

Binds directly to 23S rRNA. The L1 stalk is quite mobile in the ribosome, and is involved in E site tRNA release. Functionally, protein L1 is also a translational repressor protein, it controls the translation of the L11 operon by binding to its mRNA. This chain is Large ribosomal subunit protein uL1, found in Mycobacterium leprae (strain Br4923).